A 227-amino-acid polypeptide reads, in one-letter code: Prolactin-5A1 (227 aa).

The signal sequence occupies residues 1–27 (MQIQPHPSGALLLLLLSNLLMWENVAS). N47 is a glycosylation site (N-linked (GlcNAc...) asparagine). C85 and C204 are joined by a disulfide.

It belongs to the somatotropin/prolactin family. As to expression, expressed specifically in placenta. Highly expressed in invasive trophoblast cells lining the central placental vessel.

The protein resides in the secreted. This chain is Prolactin-5A1 (Prl5a1), found in Rattus norvegicus (Rat).